A 241-amino-acid chain; its full sequence is Probable xyloglucan-specific endo-beta-1,4-glucanase A (241 aa).

An N-terminal signal peptide occupies residues 1–15 (MKVLALSALLSLASA). A glycan (N-linked (GlcNAc...) asparagine) is linked at Asn47.

It belongs to the glycosyl hydrolase 12 (cellulase H) family.

It localises to the secreted. The enzyme catalyses xyloglucan + H2O = xyloglucan oligosaccharides.. Its function is as follows. Catalyzes endohydrolysis of 1,4-beta-D-glucosidic linkages in xyloglucan with retention of the beta-configuration of the glycosyl residues. Specific for xyloglucan and does not hydrolyze other cell wall components. The chain is Probable xyloglucan-specific endo-beta-1,4-glucanase A (xgeA) from Aspergillus niger (strain ATCC MYA-4892 / CBS 513.88 / FGSC A1513).